Consider the following 819-residue polypeptide: Protein EFR3 homolog A (819 aa).

The disordered stretch occupies residues 210–230; the sequence is DTDSRTGPPASPTTGDKEENP.

This sequence belongs to the EFR3 family. As to quaternary structure, component of a phosphatidylinositol 4-kinase (PI4K) complex. Palmitoylated at its N-terminus, anchoring the protein to the plasma membrane.

The protein resides in the cell membrane. Component of a complex required to localize phosphatidylinositol 4-kinase (PI4K) to the plasma membrane. The complex acts as a regulator of phosphatidylinositol 4-phosphate (PtdIns(4)P) synthesis. In the complex, efr3a probably acts as the membrane-anchoring component. This chain is Protein EFR3 homolog A (efr3a), found in Xenopus laevis (African clawed frog).